A 577-amino-acid polypeptide reads, in one-letter code: Arginine--tRNA ligase (577 aa).

The short motif at 122–132 is the 'HIGH' region element; it reads PNVAKEMHVGH.

The protein belongs to the class-I aminoacyl-tRNA synthetase family. Monomer.

Its subcellular location is the cytoplasm. It carries out the reaction tRNA(Arg) + L-arginine + ATP = L-arginyl-tRNA(Arg) + AMP + diphosphate. This Shigella dysenteriae serotype 1 (strain Sd197) protein is Arginine--tRNA ligase.